The sequence spans 156 residues: Small ribosomal subunit protein uS7 (156 aa).

The protein belongs to the universal ribosomal protein uS7 family. As to quaternary structure, part of the 30S ribosomal subunit. Contacts proteins S9 and S11.

Functionally, one of the primary rRNA binding proteins, it binds directly to 16S rRNA where it nucleates assembly of the head domain of the 30S subunit. Is located at the subunit interface close to the decoding center, probably blocks exit of the E-site tRNA. The sequence is that of Small ribosomal subunit protein uS7 from Bacillus cereus (strain B4264).